We begin with the raw amino-acid sequence, 1746 residues long: Inactive tyrosine-protein kinase PEAK1 (1746 aa).

A disordered region spans residues 44-66 (KTNANHSNNHRIRNTGNFRPPVA). S281 carries the post-translational modification Phosphoserine. 2 disordered regions span residues 334 to 411 (QSMV…KVPE) and 489 to 517 (LEGP…LTPG). A compositionally biased stretch (low complexity) spans 338 to 349 (SSDSTSPDSSLT). Over residues 355–364 (ETASSLSQKI) the composition is skewed to polar residues. Residues 492-513 (PVNSPKTKSSSSTPNSPVTSSS) are compositionally biased toward low complexity. Phosphoserine is present on residues S540, S572, and S587. The tract at residues 551–577 (ITSGTGPNVPPRKNCHKSAPTSPTATN) is disordered. Y635 and Y641 each carry phosphotyrosine. At S648 the chain carries Phosphoserine. Y665 carries the post-translational modification Phosphotyrosine. 5 disordered regions span residues 671-700 (ESKV…HKRG), 713-764 (LNRG…EKAS), 802-920 (DADV…AADA), 1052-1102 (VTED…DPNP), and 1138-1158 (GKTD…LPKK). The span at 675 to 694 (PDNTTSKTTDCLQTKGFSNS) shows a compositional bias: polar residues. The segment covering 718 to 730 (SSPQRSYSSSHSS) has biased composition (low complexity). Polar residues-rich tracts occupy residues 748–758 (TQESQMVGSSS) and 820–841 (LFTS…PTTK). A phosphoserine mark is found at S826 and S854. The span at 864 to 874 (SEPPAPFPPPR) shows a compositional bias: pro residues. Residues 889–902 (HFTNWTKPTSPTRS) are compositionally biased toward polar residues. S898 bears the Phosphoserine mark. 3 stretches are compositionally biased toward basic and acidic residues: residues 903 to 920 (TEAE…AADA), 1052 to 1062 (VTEDFSPRDPR), and 1084 to 1094 (ELEREDGKEDI). The residue at position 1151 (T1151) is a Phosphothreonine. Residue Y1188 is modified to Phosphotyrosine. Residues 1285-1311 (EVVGKIRSLHTDALKKLAVKCEDLFMA) are required for homodimerization. In terms of domain architecture, Protein kinase spans 1313 to 1675 (QKDQLRFGVD…LLWGPREDLF (363 aa)). Residue S1374 is modified to Phosphoserine. The segment at 1402-1456 (LLPWEDPDDPEKDEDDMEETEEDAKGETDGKNPKPCSEAASSQKENQGVMSKKQR) is disordered. Over residues 1406–1423 (EDPDDPEKDEDDMEETEE) the composition is skewed to acidic residues. A compositionally biased stretch (basic and acidic residues) spans 1424–1433 (DAKGETDGKN). Polar residues predominate over residues 1440-1450 (AASSQKENQGV). A required for homodimerization region spans residues 1670–1743 (PREDLFQTFT…DSLSCIVKIL (74 aa)).

This sequence belongs to the protein kinase superfamily. As to quaternary structure, homodimer. Interacts with BCAR1 and CRK. Interacts with PRAG1. Interacts (when phosphorylated at Tyr-1188) with SHC1 (via PID domain). Found in a complex with PPP1CA, PPP1CC, SHC1 and PEAK1. Interacts (when phosphorylated at Tyr-635) with tensin TNS3 (when phosphorylated on the SH2 domain); TNS3 also interacts with integrins ITGB1, ITGB3 and ITGB5 and mediates their association with PEAK1. Interacts with RASAL2 and GRB2. In terms of processing, phosphorylated on tyrosine in a CSK-dependent manner in response to adhesion to fibronectin and to EGF stimulation. Phosphorylation at Tyr-665 by a Src family kinase controls subcellular localization to focal adhesion and focal adhesion dynamics. Phosphorylation at Tyr-1188 is essential for binding to SHC1. Phosphorylation at Tyr-635 promotes interaction with tensin TNS3.

It localises to the cytoplasm. It is found in the cytoskeleton. The protein localises to the cell junction. Its subcellular location is the focal adhesion. Probable catalytically inactive kinase. Scaffolding protein that regulates the cytoskeleton to control cell spreading and migration by modulating focal adhesion dynamics. Acts as a scaffold for mediating EGFR signaling. This chain is Inactive tyrosine-protein kinase PEAK1 (PEAK1), found in Homo sapiens (Human).